Consider the following 444-residue polypeptide: Cytokine receptor-like factor 3 (444 aa).

The stretch at 1–65 (MSIEAEALLQ…QELQTAVSRL (65 aa)) forms a coiled coil. The Fibronectin type-III domain occupies 177 to 270 (PPVQIEELVE…PQTGYTTLAP (94 aa)).

The protein belongs to the cytokine receptor-like factor 3 family.

It localises to the cytoplasm. In terms of biological role, may play a role in the negative regulation of cell cycle progression. This Danio rerio (Zebrafish) protein is Cytokine receptor-like factor 3 (crlf3).